A 521-amino-acid chain; its full sequence is Cytochrome P450 1A1 (521 aa).

F229 is a substrate binding site. C463 contacts heme.

This sequence belongs to the cytochrome P450 family. Heme is required as a cofactor.

The protein resides in the endoplasmic reticulum membrane. It localises to the microsome membrane. The enzyme catalyses an organic molecule + reduced [NADPH--hemoprotein reductase] + O2 = an alcohol + oxidized [NADPH--hemoprotein reductase] + H2O + H(+). Its function is as follows. Cytochromes P450 are a group of heme-thiolate monooxygenases. They oxidize a variety of structurally unrelated compounds, including steroids, fatty acids, and xenobiotics. The protein is Cytochrome P450 1A1 (cyp1a1) of Platichthys flesus (European flounder).